Consider the following 473-residue polypeptide: RuvB-like helicase 2 (473 aa).

76-83 (GPPSTGKT) contacts ATP.

This sequence belongs to the RuvB family. May form heterododecamers with RVB1. Component of the SWR1 chromatin remodeling complex, the INO80 chromatin remodeling complex, and of the R2TP complex.

It is found in the nucleus. It carries out the reaction ATP + H2O = ADP + phosphate + H(+). DNA helicase which participates in several chromatin remodeling complexes, including the SWR1 and the INO80 complexes. The SWR1 complex mediates the ATP-dependent exchange of histone H2A for the H2A variant HZT1 leading to transcriptional regulation of selected genes by chromatin remodeling. The INO80 complex remodels chromatin by shifting nucleosomes and is involved in DNA repair. Also involved in pre-rRNA processing. The protein is RuvB-like helicase 2 (RVB2) of Gibberella zeae (strain ATCC MYA-4620 / CBS 123657 / FGSC 9075 / NRRL 31084 / PH-1) (Wheat head blight fungus).